The following is a 119-amino-acid chain: C-X-C motif chemokine 17 (119 aa).

Residues 1-22 (MKLLASPFLLLLPVMLMSMVFS) form the signal peptide. Residues 75 to 100 (CPCDHVKGREKKNRHQKHHRKSQRPS) are disordered. Disulfide bonds link C75/C103 and C77/C110. Positions 82–98 (GREKKNRHQKHHRKSQR) are enriched in basic residues.

This sequence belongs to the intercrine alpha (chemokine CxC) family. In terms of processing, likely to undergo an endoproteolytic process to form a four-cysteine-containing mature peptide with a canonical CXC chemokine scaffold after secretion. As to expression, detected in lung, trachea, lung, tongue thyroid, submaxillary gland, epididymis, and uterus tissues and at a lower level in ovary, prostate and in intestinal tissues.

The protein resides in the secreted. Functionally, chemokine that acts as a chemoattractant for monocytes, macrophages and dendritic cells. Plays a role in angiogenesis and possibly in the development of tumors. Acts as an anti-inflammatory in the stomach. May play a role in the innate defense against infections. Activates the C-X-C chemokine receptor GPR35 to induce a rapid and transient rise in the level of intracellular calcium ions. The chain is C-X-C motif chemokine 17 (Cxcl17) from Mus musculus (Mouse).